The chain runs to 287 residues: 4-hydroxybenzoate octaprenyltransferase (287 aa).

8 helical membrane passes run Ile-19–Leu-39, Trp-42–Ile-62, Phe-95–Ile-115, Tyr-136–Ala-156, Trp-166–Val-186, Ile-210–Ala-230, Gly-233–Ile-253, and Ala-264–Leu-284.

Belongs to the UbiA prenyltransferase family. It depends on Mg(2+) as a cofactor.

It localises to the cell inner membrane. It carries out the reaction all-trans-octaprenyl diphosphate + 4-hydroxybenzoate = 4-hydroxy-3-(all-trans-octaprenyl)benzoate + diphosphate. It functions in the pathway cofactor biosynthesis; ubiquinone biosynthesis. In terms of biological role, catalyzes the prenylation of para-hydroxybenzoate (PHB) with an all-trans polyprenyl group. Mediates the second step in the final reaction sequence of ubiquinone-8 (UQ-8) biosynthesis, which is the condensation of the polyisoprenoid side chain with PHB, generating the first membrane-bound Q intermediate 3-octaprenyl-4-hydroxybenzoate. The sequence is that of 4-hydroxybenzoate octaprenyltransferase from Aliivibrio fischeri (strain MJ11) (Vibrio fischeri).